Consider the following 91-residue polypeptide: DNA-binding protein HU (91 aa).

Belongs to the bacterial histone-like protein family.

Histone-like DNA-binding protein which is capable of wrapping DNA to stabilize it, and thus to prevent its denaturation under extreme environmental conditions. Also seems to act as a fortuitous virulence factor in delayed sequelae by binding to heparan sulfate-proteoglycans in the extracellular matrix of target organs and acting as a nidus for in situ immune complex formation. The polypeptide is DNA-binding protein HU (hup) (Streptococcus downei (Streptococcus sobrinus)).